The primary structure comprises 101 residues: Large ribosomal subunit protein uL24 (101 aa).

The protein belongs to the universal ribosomal protein uL24 family. As to quaternary structure, part of the 50S ribosomal subunit.

In terms of biological role, one of two assembly initiator proteins, it binds directly to the 5'-end of the 23S rRNA, where it nucleates assembly of the 50S subunit. One of the proteins that surrounds the polypeptide exit tunnel on the outside of the subunit. This Streptococcus pyogenes serotype M1 protein is Large ribosomal subunit protein uL24.